The primary structure comprises 332 residues: DNA-directed RNA polymerase 2A (332 aa).

Catalysis depends on residues Asp-33, Lys-108, and Asp-265.

It belongs to the phage and mitochondrial RNA polymerase family.

The catalysed reaction is RNA(n) + a ribonucleoside 5'-triphosphate = RNA(n+1) + diphosphate. Functionally, DNA-dependent RNA polymerase catalyzes the transcription of DNA into RNA using the four ribonucleoside triphosphates as substrates. This Nicotiana tabacum (Common tobacco) protein is DNA-directed RNA polymerase 2A (RPOT2-SYL).